The following is a 300-amino-acid chain: Protoheme IX farnesyltransferase 1 (300 aa).

A run of 8 helical transmembrane segments spans residues 28–48 (VVAL…PGAV), 50–70 (VQPL…AAAY), 106–126 (AMAI…TAWL), 150–170 (IVVG…AITG), 176–196 (ALLL…ALAI), 222–242 (CIML…LVGM), 243–263 (CGPL…YKAW), and 280–300 (FSIY…YLWS).

Belongs to the UbiA prenyltransferase family. Protoheme IX farnesyltransferase subfamily.

The protein localises to the cell inner membrane. It carries out the reaction heme b + (2E,6E)-farnesyl diphosphate + H2O = Fe(II)-heme o + diphosphate. The protein operates within porphyrin-containing compound metabolism; heme O biosynthesis; heme O from protoheme: step 1/1. In terms of biological role, converts heme B (protoheme IX) to heme O by substitution of the vinyl group on carbon 2 of heme B porphyrin ring with a hydroxyethyl farnesyl side group. This Shewanella loihica (strain ATCC BAA-1088 / PV-4) protein is Protoheme IX farnesyltransferase 1.